The chain runs to 505 residues: ATP synthase subunit alpha (505 aa).

171 to 178 contributes to the ATP binding site; the sequence is GDRQTGKT.

It belongs to the ATPase alpha/beta chains family. F-type ATPases have 2 components, CF(1) - the catalytic core - and CF(0) - the membrane proton channel. CF(1) has five subunits: alpha(3), beta(3), gamma(1), delta(1), epsilon(1). CF(0) has three main subunits: a(1), b(2) and c(9-12). The alpha and beta chains form an alternating ring which encloses part of the gamma chain. CF(1) is attached to CF(0) by a central stalk formed by the gamma and epsilon chains, while a peripheral stalk is formed by the delta and b chains.

The protein localises to the cell inner membrane. It catalyses the reaction ATP + H2O + 4 H(+)(in) = ADP + phosphate + 5 H(+)(out). Its function is as follows. Produces ATP from ADP in the presence of a proton gradient across the membrane. The alpha chain is a regulatory subunit. The polypeptide is ATP synthase subunit alpha (Nitratiruptor sp. (strain SB155-2)).